The following is a 328-amino-acid chain: Malate dehydrogenase (328 aa).

An NAD(+)-binding site is contributed by 12–18 (GAAGQIA). 2 residues coordinate substrate: Arg93 and Arg99. Residues Asn106, Gln113, and 130 to 132 (VGN) contribute to the NAD(+) site. Residues Asn132 and Arg163 each coordinate substrate. The active-site Proton acceptor is His188.

It belongs to the LDH/MDH superfamily. MDH type 2 family.

It carries out the reaction (S)-malate + NAD(+) = oxaloacetate + NADH + H(+). Catalyzes the reversible oxidation of malate to oxaloacetate. In Burkholderia multivorans (strain ATCC 17616 / 249), this protein is Malate dehydrogenase.